Here is a 347-residue protein sequence, read N- to C-terminus: Holliday junction branch migration complex subunit RuvB (347 aa).

The interval 1–182 is large ATPase domain (RuvB-L); that stretch reads MSAQNPVLTP…FGIPVRLSFY (182 aa). ATP contacts are provided by residues Leu21, Arg22, Gly63, Lys66, Thr67, Thr68, 129 to 131, Arg172, Tyr182, and Arg219; that span reads EDF. Residue Thr67 participates in Mg(2+) binding. The interval 183 to 253 is small ATPAse domain (RuvB-S); it reads TVEELELIVR…IADEALTRLL (71 aa). The interval 256–347 is head domain (RuvB-H); it reads NMGLDQLDTR…QFRLTLEDDD (92 aa). The DNA site is built by Arg292, Arg311, and Arg316.

It belongs to the RuvB family. As to quaternary structure, homohexamer. Forms an RuvA(8)-RuvB(12)-Holliday junction (HJ) complex. HJ DNA is sandwiched between 2 RuvA tetramers; dsDNA enters through RuvA and exits via RuvB. An RuvB hexamer assembles on each DNA strand where it exits the tetramer. Each RuvB hexamer is contacted by two RuvA subunits (via domain III) on 2 adjacent RuvB subunits; this complex drives branch migration. In the full resolvosome a probable DNA-RuvA(4)-RuvB(12)-RuvC(2) complex forms which resolves the HJ.

The protein localises to the cytoplasm. The catalysed reaction is ATP + H2O = ADP + phosphate + H(+). The RuvA-RuvB-RuvC complex processes Holliday junction (HJ) DNA during genetic recombination and DNA repair, while the RuvA-RuvB complex plays an important role in the rescue of blocked DNA replication forks via replication fork reversal (RFR). RuvA specifically binds to HJ cruciform DNA, conferring on it an open structure. The RuvB hexamer acts as an ATP-dependent pump, pulling dsDNA into and through the RuvAB complex. RuvB forms 2 homohexamers on either side of HJ DNA bound by 1 or 2 RuvA tetramers; 4 subunits per hexamer contact DNA at a time. Coordinated motions by a converter formed by DNA-disengaged RuvB subunits stimulates ATP hydrolysis and nucleotide exchange. Immobilization of the converter enables RuvB to convert the ATP-contained energy into a lever motion, pulling 2 nucleotides of DNA out of the RuvA tetramer per ATP hydrolyzed, thus driving DNA branch migration. The RuvB motors rotate together with the DNA substrate, which together with the progressing nucleotide cycle form the mechanistic basis for DNA recombination by continuous HJ branch migration. Branch migration allows RuvC to scan DNA until it finds its consensus sequence, where it cleaves and resolves cruciform DNA. The polypeptide is Holliday junction branch migration complex subunit RuvB (Allorhizobium ampelinum (strain ATCC BAA-846 / DSM 112012 / S4) (Agrobacterium vitis (strain S4))).